We begin with the raw amino-acid sequence, 315 residues long: tRNA dimethylallyltransferase (315 aa).

Gly-13–Thr-20 is an ATP binding site. Residue Thr-15–Thr-20 participates in substrate binding. 4 interaction with substrate tRNA regions span residues Asp-38 to Leu-41, Gln-162 to Arg-166, Arg-243 to Arg-248, and Lys-276 to Arg-283.

It belongs to the IPP transferase family. Monomer. The cofactor is Mg(2+).

It carries out the reaction adenosine(37) in tRNA + dimethylallyl diphosphate = N(6)-dimethylallyladenosine(37) in tRNA + diphosphate. Its function is as follows. Catalyzes the transfer of a dimethylallyl group onto the adenine at position 37 in tRNAs that read codons beginning with uridine, leading to the formation of N6-(dimethylallyl)adenosine (i(6)A). The chain is tRNA dimethylallyltransferase from Vibrio vulnificus (strain YJ016).